Reading from the N-terminus, the 267-residue chain is Glucosamine-6-phosphate deaminase (267 aa).

D76 (proton acceptor; for enolization step) is an active-site residue. Residue D145 is the For ring-opening step of the active site. H147 acts as the Proton acceptor; for ring-opening step in catalysis. The active-site For ring-opening step is E152.

Belongs to the glucosamine/galactosamine-6-phosphate isomerase family. In terms of assembly, homohexamer.

It is found in the cytoplasm. The enzyme catalyses alpha-D-glucosamine 6-phosphate + H2O = beta-D-fructose 6-phosphate + NH4(+). It functions in the pathway nucleotide-sugar biosynthesis; UDP-N-acetyl-alpha-D-glucosamine biosynthesis; alpha-D-glucosamine 6-phosphate from D-fructose 6-phosphate: step 1/1. Catalyzes the reversible conversion of alpha-D-glucosamine 6-phosphate (GlcN-6P) into beta-D-fructose 6-phosphate (Fru-6P) and ammonium ion, a regulatory reaction step in de novo uridine diphosphate-N-acetyl-alpha-D-glucosamine (UDP-GlcNAc) biosynthesis via hexosamine pathway. This Dictyostelium discoideum (Social amoeba) protein is Glucosamine-6-phosphate deaminase.